The chain runs to 243 residues: Probable intron-encoded endonuclease aI3 (243 aa).

It belongs to the LAGLIDADG endonuclease family.

It localises to the mitochondrion. Its function is as follows. Mitochondrial DNA endonuclease involved in intron homing. This Dictyostelium citrinum (Slime mold) protein is Probable intron-encoded endonuclease aI3 (aI3).